The following is a 473-amino-acid chain: Cytochrome P450 716A2 (473 aa).

The chain crosses the membrane as a helical span at residues 1-21; that stretch reads MYLTIIFLFISSIIFPLLFFL. Residue cysteine 420 participates in heme binding.

It belongs to the cytochrome P450 family. Heme serves as cofactor.

The protein resides in the membrane. In terms of biological role, possesses triterpene oxidizing activity. Catalyzes the C28 hydroxylation of alpha-amyrin, beta-amyrin, and lupeol, producing uvaol, erythrodiol, and betulin, respectively. Catalyzes the C28 carboxylation of alpha- and beta-amyrin. Possesses 22alpha-hydroxylation activity against alpha- and beta-amaryn. This is Cytochrome P450 716A2 from Arabidopsis thaliana (Mouse-ear cress).